A 270-amino-acid chain; its full sequence is S-methyl-5'-thioadenosine phosphorylase (270 aa).

Residues serine 16, 58–59 (RH), and 91–92 (SA) each bind phosphate. Cystine bridges form between cysteine 138-cysteine 205, cysteine 200-cysteine 262, and cysteine 259-cysteine 261. Residue methionine 190 coordinates substrate. Residue threonine 191 participates in phosphate binding. 214–216 (DYD) contributes to the substrate binding site.

The protein belongs to the PNP/MTAP phosphorylase family. MTAP subfamily. In terms of assembly, homohexamer. Dimer of a homotrimer.

It carries out the reaction S-methyl-5'-thioadenosine + phosphate = 5-(methylsulfanyl)-alpha-D-ribose 1-phosphate + adenine. The protein operates within amino-acid biosynthesis; L-methionine biosynthesis via salvage pathway; S-methyl-5-thio-alpha-D-ribose 1-phosphate from S-methyl-5'-thioadenosine (phosphorylase route): step 1/1. Functionally, catalyzes the reversible phosphorylation of S-methyl-5'-thioadenosine (MTA) to adenine and 5-methylthioribose-1-phosphate. Involved in the breakdown of MTA, a major by-product of polyamine biosynthesis. Responsible for the first step in the methionine salvage pathway after MTA has been generated from S-adenosylmethionine. Has broad substrate specificity with 6-aminopurine nucleosides as preferred substrates. In Saccharolobus solfataricus (strain ATCC 35092 / DSM 1617 / JCM 11322 / P2) (Sulfolobus solfataricus), this protein is S-methyl-5'-thioadenosine phosphorylase.